A 586-amino-acid chain; its full sequence is Transmembrane protease serine 13 (586 aa).

Disordered stretches follow at residues 1–115 (MERD…VTTS) and 131–157 (PIRS…LPKF). At 1–165 (MERDSHGNAS…KFTWREGQKQ (165 aa)) the chain is on the cytoplasmic side. The 1-1 repeat unit spans residues 9–13 (ASPAR). The interval 9 to 93 (ASPARTPSAG…ASPARASPAL (85 aa)) is 13 X 5 AA repeats of A-S-P-A-[GLQR]. A 2-1; approximate repeat occupies 14–18 (TPSAG). The segment covering 14-52 (TPSAGASPAQASPAGTPPGRASPAQASPAQASPAGTPPG) has biased composition (low complexity). Residues 14–68 (TPSAGASPAQASPAGTPPGRASPAQASPAQASPAGTPPGRASPAQASPAGTPPGR) are 4 X 5 AA repeats of T-P-P-G-R. Tandem repeats lie at residues 19 to 23 (ASPAQ), 24 to 28 (ASPAG), 29 to 33 (TPPGR), 34 to 38 (ASPAQ), 39 to 43 (ASPAQ), 44 to 48 (ASPAG), 49 to 53 (TPPGR), 54 to 58 (ASPAQ), 59 to 63 (ASPAG), and 64 to 68 (TPPGR). One copy of the 1-9; approximate repeat lies at 69-78 (ASPGRASPAQ). 2 stretches are compositionally biased toward low complexity: residues 69 to 111 (ASPG…RSAS) and 133 to 144 (RSSPARSAPATR). 3 tandem repeats follow at residues 79 to 83 (ASPAQ), 84 to 88 (ASPAR), and 89 to 93 (ASPAL). The helical; Signal-anchor for type II membrane protein transmembrane segment at 166 to 186 (LPLIGCVLLLIALVVSLIILF) threads the bilayer. Residues 187 to 586 (QFWQGHTGIR…GGDPGGAPRL (400 aa)) are Extracellular-facing. The region spanning 195-325 (IRYKEQRESC…HCGLRAMTGR (131 aa)) is the SRCR domain. Residues 204–226 (CPKHAVRCDGVVDCKLKSDELGC) enclose the LDL-receptor class A domain. Intrachain disulfides connect cysteine 250/cysteine 314, cysteine 263/cysteine 317, and cysteine 351/cysteine 367. Asparagine 255 and asparagine 292 each carry an N-linked (GlcNAc...) asparagine glycan. The 234-residue stretch at 326-559 (IVGGALASDS…VLPWIYSKME (234 aa)) folds into the Peptidase S1 domain. Histidine 366 serves as the catalytic Charge relay system. A glycan (N-linked (GlcNAc...) asparagine) is linked at asparagine 405. The active-site Charge relay system is the aspartate 414. An N-linked (GlcNAc...) asparagine glycan is attached at asparagine 445. 3 disulfides stabilise this stretch: cysteine 448/cysteine 517, cysteine 480/cysteine 496, and cysteine 507/cysteine 535. Residue serine 511 is the Charge relay system of the active site. Residues 565–574 (QDTAPSRLGT) show a composition bias toward polar residues. Residues 565-586 (QDTAPSRLGTSSGGDPGGAPRL) are disordered. Gly residues predominate over residues 575 to 586 (SSGGDPGGAPRL).

It belongs to the peptidase S1 family. As to quaternary structure, interacts with SPINT1/HAI-1; the interaction promotes the phosphorylation and cell membrane localization of TMPRSS13. Interacts with SPINT2/HAI-2; the interaction promotes the phosphorylation and cell membrane localization of TMPRSS13. The inactive zymogen is post-translationally modified and then trafficked to the cell surface, whereby it undergoes autocatalytic cleavage resulting in an activated form that is released extracellularly. In terms of processing, phosphorylation is required for localization at the cell surface. Phosphorylation increases following inhibition of protease activity by SPINT2/HAI-2. Post-translationally, N-glycosylation of Asn-405 and Asn-445 is required for exit from the endoplasmic reticulum and trafficking to the cell surface. Also required for autocleavage of the zymogen, activation and secretion of the mature protein. In terms of tissue distribution, expressed in placenta. As to expression, predominantly expressed in lung, placenta, pancreas, and prostate. Expressed in lung, placenta, pancreas, and prostate. Weakly expressed in testis and peripheral blood lymphocytes.

Its subcellular location is the cell membrane. The protein resides in the secreted. It is found in the cytoplasm. Its activity is regulated as follows. Cleavage of HGF is inhibited by SPINT1/HAI-1 via the BPTI/Kunitz inhibitor 1 domain. Serine protease. Cleaves the proform of PRSS8/prostasin to form the active protein. Cleaves the proform of HGF to form the active protein which promotes MAPK signaling. Promotes the formation of the stratum corneum and subsequently the epidermal barrier in embryos. The polypeptide is Transmembrane protease serine 13 (TMPRSS13) (Homo sapiens (Human)).